The following is a 134-amino-acid chain: Large-conductance mechanosensitive channel (134 aa).

The next 2 membrane-spanning stretches (helical) occupy residues 16–36 and 81–101; these read VIDL…VTAL and GDFL…FIIV.

This sequence belongs to the MscL family. As to quaternary structure, homopentamer.

The protein resides in the cell inner membrane. Channel that opens in response to stretch forces in the membrane lipid bilayer. May participate in the regulation of osmotic pressure changes within the cell. The protein is Large-conductance mechanosensitive channel of Xylella fastidiosa (strain 9a5c).